The primary structure comprises 177 residues: Meiotically up-regulated gene 121 protein (177 aa).

Residues 1–23 (MKGFVVISRFILTLFILITPGLA) form the signal peptide. The N-linked (GlcNAc...) asparagine glycan is linked to Asn121.

It localises to the endoplasmic reticulum. Its subcellular location is the golgi apparatus. Has a role in meiosis. This is Meiotically up-regulated gene 121 protein (mug121) from Schizosaccharomyces pombe (strain 972 / ATCC 24843) (Fission yeast).